Consider the following 130-residue polypeptide: Small ribosomal subunit protein uS11 (130 aa).

The protein belongs to the universal ribosomal protein uS11 family. Part of the 30S ribosomal subunit. Interacts with proteins S7 and S18. Binds to IF-3.

Functionally, located on the platform of the 30S subunit, it bridges several disparate RNA helices of the 16S rRNA. Forms part of the Shine-Dalgarno cleft in the 70S ribosome. The polypeptide is Small ribosomal subunit protein uS11 (Dehalococcoides mccartyi (strain ATCC BAA-2266 / KCTC 15142 / 195) (Dehalococcoides ethenogenes (strain 195))).